The primary structure comprises 212 residues: Adenylate kinase (212 aa).

10–15 lines the ATP pocket; the sequence is GAGKGT. Positions 30–59 are NMP; that stretch reads STGDMFRAAMANQTEMGVLAKSYIDKGELV. AMP-binding positions include Thr-31, Arg-36, 57–59, 86–89, and Gln-93; these read ELV and GYPR. Positions 127–159 are LID; sequence GRIIHRVTGETFHKVFNPPVDYKEEDYYQREDD. Residues Arg-128 and 137-138 contribute to the ATP site; that span reads TF. AMP is bound by residues Arg-156 and Arg-167. ATP is bound at residue Gln-195.

This sequence belongs to the adenylate kinase family. In terms of assembly, monomer.

The protein resides in the cytoplasm. It carries out the reaction AMP + ATP = 2 ADP. The protein operates within purine metabolism; AMP biosynthesis via salvage pathway; AMP from ADP: step 1/1. Its function is as follows. Catalyzes the reversible transfer of the terminal phosphate group between ATP and AMP. Plays an important role in cellular energy homeostasis and in adenine nucleotide metabolism. The protein is Adenylate kinase of Streptococcus pneumoniae serotype 4 (strain ATCC BAA-334 / TIGR4).